The sequence spans 436 residues: 3-ketoacyl-CoA thiolase (436 aa).

C99 functions as the Acyl-thioester intermediate in the catalytic mechanism. Residues H392 and C422 each act as proton acceptor in the active site.

This sequence belongs to the thiolase-like superfamily. Thiolase family. As to quaternary structure, heterotetramer of two alpha chains (FadJ) and two beta chains (FadI).

It is found in the cytoplasm. The catalysed reaction is an acyl-CoA + acetyl-CoA = a 3-oxoacyl-CoA + CoA. The protein operates within lipid metabolism; fatty acid beta-oxidation. In terms of biological role, catalyzes the final step of fatty acid oxidation in which acetyl-CoA is released and the CoA ester of a fatty acid two carbons shorter is formed. The protein is 3-ketoacyl-CoA thiolase of Salmonella paratyphi A (strain ATCC 9150 / SARB42).